Here is a 318-residue protein sequence, read N- to C-terminus: Transaldolase (318 aa).

K132 functions as the Schiff-base intermediate with substrate in the catalytic mechanism.

Belongs to the transaldolase family. Type 1 subfamily. Homodimer.

Its subcellular location is the cytoplasm. The enzyme catalyses D-sedoheptulose 7-phosphate + D-glyceraldehyde 3-phosphate = D-erythrose 4-phosphate + beta-D-fructose 6-phosphate. The protein operates within carbohydrate degradation; pentose phosphate pathway; D-glyceraldehyde 3-phosphate and beta-D-fructose 6-phosphate from D-ribose 5-phosphate and D-xylulose 5-phosphate (non-oxidative stage): step 2/3. Functionally, transaldolase is important for the balance of metabolites in the pentose-phosphate pathway. The chain is Transaldolase from Shewanella woodyi (strain ATCC 51908 / MS32).